Consider the following 475-residue polypeptide: Ataxin-10 (475 aa).

R10 carries the omega-N-methylarginine modification. Phosphoserine is present on residues S12 and S77. At T82 the chain carries Phosphothreonine. S430 carries the phosphoserine modification.

The protein belongs to the ataxin-10 family. In terms of assembly, homooligomer. Interacts with GNB2. Interacts with IQCB1. Interacts with OGT. Interacts with PLK1. In terms of processing, polyubiquitinated. Post-translationally, phosphorylation at Ser-12 by AURKB promotes the association of ATXN10 with PLK1. Phosphorylation at Ser-77 and Thr-82 by PLK1 may play a role in the regulation of cytokinesis and may stimulate the proteasome-mediated degradation of ATXN10. As to expression, in high cell density areas; cerebellar cortex, dentate gyrus, hippocampus, anterior olfactory nucleus, primary olfactory cortex.

The protein localises to the cytoplasm. It localises to the perinuclear region. It is found in the midbody. The protein resides in the cytoskeleton. Its subcellular location is the cilium basal body. The protein localises to the microtubule organizing center. It localises to the centrosome. It is found in the centriole. May play a role in the regulation of cytokinesis. May play a role in signaling by stimulating protein glycosylation. Induces neuritogenesis by activating the Ras-MAP kinase pathway and is necessary for the survival of cerebellar neurons. Does not appear to play a major role in ciliogenesis. The chain is Ataxin-10 (Atxn10) from Mus musculus (Mouse).